The sequence spans 170 residues: Ubiquitin-conjugating enzyme E2 2 (170 aa).

Residues 4 to 150 form the UBC core domain; that stretch reads PARRRLMRDF…VKETVEKSWE (147 aa). Catalysis depends on Cys88, which acts as the Glycyl thioester intermediate. The interval 148–170 is disordered; that stretch reads SWEDDLKDMDDGDDDDDDDDDDD. Residues 152–170 show a composition bias toward acidic residues; it reads DLKDMDDGDDDDDDDDDDD.

It belongs to the ubiquitin-conjugating enzyme family.

It is found in the cytoplasm. The protein localises to the nucleus. It catalyses the reaction S-ubiquitinyl-[E1 ubiquitin-activating enzyme]-L-cysteine + [E2 ubiquitin-conjugating enzyme]-L-cysteine = [E1 ubiquitin-activating enzyme]-L-cysteine + S-ubiquitinyl-[E2 ubiquitin-conjugating enzyme]-L-cysteine.. It participates in protein modification; protein ubiquitination. In terms of biological role, catalyzes the covalent attachment of ubiquitin to other proteins. Plays a role in transcription regulation by catalyzing the monoubiquitination of histone H2B to form H2BK123ub1. H2BK123ub1 gives a specific tag for epigenetic transcriptional activation and is also a prerequisite for H3K4me and H3K79me formation. Also involved in postreplication repair of UV-damaged DNA, in N-end rule-dependent protein degradation and in sporulation. This is Ubiquitin-conjugating enzyme E2 2 (UBC2) from Eremothecium gossypii (strain ATCC 10895 / CBS 109.51 / FGSC 9923 / NRRL Y-1056) (Yeast).